A 273-amino-acid chain; its full sequence is Protein ALUMINUM SENSITIVE 3 (273 aa).

The next 7 membrane-spanning stretches (helical) occupy residues 14-34 (WLIV…VVLL), 51-71 (IYSV…LQFI), 76-96 (NSGW…YTAG), 107-127 (YVAG…LVLL), 136-156 (YMIP…GVTM), 191-213 (ALVI…SLPG), and 228-248 (AIQL…VSSI).

This sequence belongs to the UPF0014 family. In terms of tissue distribution, expressed in roots, leaves, stems, and flowers.

The protein resides in the cell membrane. Its function is as follows. Required for aluminum (Al) resistance/tolerance, probably by translocating Al from sensitive tissues such as growing roots to tissues less sensisitive to the toxic effects of Al. In Arabidopsis thaliana (Mouse-ear cress), this protein is Protein ALUMINUM SENSITIVE 3 (ALS3).